A 381-amino-acid chain; its full sequence is Subtilisin J (381 aa).

The signal sequence occupies residues 1–29; it reads MRSKKLWISLLFALTLIFTMAFSNMSVQA. The propeptide occupies 30–106; the sequence is AGKSSTEKKY…VEEDHIAHEY (77 aa). The region spanning 38 to 103 is the Inhibitor I9 domain; the sequence is KYIVGFKQTM…VAYVEEDHIA (66 aa). Residue Q108 coordinates Ca(2+). The Peptidase S8 domain occupies 111–380; the sequence is PYGISQIKAP…KGLINVQAAA (270 aa). D138 (charge relay system) is an active-site residue. D147 is a binding site for Ca(2+). H170 (charge relay system) is an active-site residue. L181, N183, I185, V187, A275, Y277, and T280 together coordinate Ca(2+). S327 functions as the Charge relay system in the catalytic mechanism.

It belongs to the peptidase S8 family. Requires Ca(2+) as cofactor.

Its subcellular location is the secreted. It catalyses the reaction Hydrolysis of proteins with broad specificity for peptide bonds, and a preference for a large uncharged residue in P1. Hydrolyzes peptide amides.. Functionally, subtilisin is an extracellular alkaline serine protease, it catalyzes the hydrolysis of proteins and peptide amides. The chain is Subtilisin J (aprJ) from Geobacillus stearothermophilus (Bacillus stearothermophilus).